Reading from the N-terminus, the 189-residue chain is MQAFKKLTSSAIPLWLSDIDTDMIIPANFLTQTTKDGYGKSLFHNLKEKDSSFVFNNPDYSNSEILIAGDNFGCGSSREHAVWALTQAGIKVIIAPSFSDIFFNNAAKNGLLLISLDKDTVKELCDKAEDPKFSMTIDLQEQTVSADGSIYSFDYDPFRKDCLIRGLDDMTYLIEHLDIIKQFEQSQRG.

Belongs to the LeuD family. LeuD type 1 subfamily. Heterodimer of LeuC and LeuD.

The enzyme catalyses (2R,3S)-3-isopropylmalate = (2S)-2-isopropylmalate. It functions in the pathway amino-acid biosynthesis; L-leucine biosynthesis; L-leucine from 3-methyl-2-oxobutanoate: step 2/4. Functionally, catalyzes the isomerization between 2-isopropylmalate and 3-isopropylmalate, via the formation of 2-isopropylmaleate. The protein is 3-isopropylmalate dehydratase small subunit of Francisella tularensis subsp. holarctica (strain FTNF002-00 / FTA).